Consider the following 208-residue polypeptide: Ras-related protein RABH1b (208 aa).

A GTP-binding site is contributed by 16-23 (GDQSVGKT). An Effector region motif is present at residues 38 to 46 (YQATIGIDF). GTP contacts are provided by residues 64–68 (DTAGQ), 122–125 (NKTD), and 152–153 (SA). Residues C206 and C208 are each lipidated (S-geranylgeranyl cysteine). At C208 the chain carries Cysteine methyl ester.

Belongs to the small GTPase superfamily. Rab family. Interacts with the C-terminus of GC5, but not with GC3. In terms of tissue distribution, expressed in roots, stems, leaves and flowers.

It is found in the golgi apparatus membrane. It localises to the cytoplasm. Its subcellular location is the cytosol. Functionally, protein transport. Regulator of membrane traffic from the Golgi apparatus towards the endoplasmic reticulum (ER). Binds GTP and GDP and possesses intrinsic GTPase activity. The protein is Ras-related protein RABH1b (RABH1B) of Arabidopsis thaliana (Mouse-ear cress).